A 622-amino-acid polypeptide reads, in one-letter code: DNA-directed RNA polymerase subunit gamma (622 aa).

Residues Cys-70, Cys-72, Cys-85, and Cys-88 each contribute to the Zn(2+) site. The Mg(2+) site is built by Asp-466, Asp-468, and Asp-470.

It belongs to the RNA polymerase beta' chain family. RpoC1 subfamily. In terms of assembly, in cyanobacteria the RNAP catalytic core is composed of 2 alpha, 1 beta, 1 beta', 1 gamma and 1 omega subunit. When a sigma factor is associated with the core the holoenzyme is formed, which can initiate transcription. The cofactor is Mg(2+). Requires Zn(2+) as cofactor.

It catalyses the reaction RNA(n) + a ribonucleoside 5'-triphosphate = RNA(n+1) + diphosphate. In terms of biological role, DNA-dependent RNA polymerase catalyzes the transcription of DNA into RNA using the four ribonucleoside triphosphates as substrates. The polypeptide is DNA-directed RNA polymerase subunit gamma (Cyanothece sp. (strain PCC 7425 / ATCC 29141)).